A 154-amino-acid polypeptide reads, in one-letter code: 6,7-dimethyl-8-ribityllumazine synthase (154 aa).

5-amino-6-(D-ribitylamino)uracil is bound by residues Phe-22, Ala-56–Glu-58, and Thr-80–Ile-82. Ser-85–Thr-86 contacts (2S)-2-hydroxy-3-oxobutyl phosphate. Catalysis depends on His-88, which acts as the Proton donor. Phe-113 is a binding site for 5-amino-6-(D-ribitylamino)uracil. Arg-127 serves as a coordination point for (2S)-2-hydroxy-3-oxobutyl phosphate.

It belongs to the DMRL synthase family.

It catalyses the reaction (2S)-2-hydroxy-3-oxobutyl phosphate + 5-amino-6-(D-ribitylamino)uracil = 6,7-dimethyl-8-(1-D-ribityl)lumazine + phosphate + 2 H2O + H(+). It functions in the pathway cofactor biosynthesis; riboflavin biosynthesis; riboflavin from 2-hydroxy-3-oxobutyl phosphate and 5-amino-6-(D-ribitylamino)uracil: step 1/2. Its function is as follows. Catalyzes the formation of 6,7-dimethyl-8-ribityllumazine by condensation of 5-amino-6-(D-ribitylamino)uracil with 3,4-dihydroxy-2-butanone 4-phosphate. This is the penultimate step in the biosynthesis of riboflavin. The sequence is that of 6,7-dimethyl-8-ribityllumazine synthase from Lactococcus lactis subsp. lactis (strain IL1403) (Streptococcus lactis).